The primary structure comprises 422 residues: Methylaspartate ammonia-lyase (422 aa).

Q175 is a binding site for (2S,3S)-3-methyl-L-aspartate. The Mg(2+) site is built by D239, E276, and D310. Position 332 (Q332) interacts with (2S,3S)-3-methyl-L-aspartate. Catalysis depends on K334, which acts as the Proton acceptor. Residue 363–364 (TC) coordinates (2S,3S)-3-methyl-L-aspartate.

Belongs to the methylaspartate ammonia-lyase family. In terms of assembly, homodimer. The cofactor is Mg(2+).

The catalysed reaction is (2S,3S)-3-methyl-L-aspartate = mesaconate + NH4(+). The protein operates within amino-acid degradation; L-glutamate degradation via mesaconate pathway; acetate and pyruvate from L-glutamate: step 2/4. Functionally, involved in the methylaspartate cycle. Catalyzes the formation of the alpha,beta-unsaturated bond by the reversible anti elimination of ammonia from L-threo-beta-methylaspartate (L-threo-(2S,3S)-3-methylaspartate) to give mesaconate. The sequence is that of Methylaspartate ammonia-lyase (mal) from Haloarcula marismortui (strain ATCC 43049 / DSM 3752 / JCM 8966 / VKM B-1809) (Halobacterium marismortui).